The sequence spans 242 residues: Probable L-ribulose-5-phosphate 4-epimerase UlaF (242 aa).

Residues 31–32 (GN), 48–49 (SG), and 78–79 (SS) each bind substrate. Asp80, His99, and His101 together coordinate Zn(2+). Asp124 (proton donor/acceptor) is an active-site residue. Zn(2+) is bound at residue His175. Tyr234 serves as the catalytic Proton donor/acceptor.

It belongs to the aldolase class II family. AraD/FucA subfamily. Requires Zn(2+) as cofactor.

The catalysed reaction is L-ribulose 5-phosphate = D-xylulose 5-phosphate. Its pathway is cofactor degradation; L-ascorbate degradation; D-xylulose 5-phosphate from L-ascorbate: step 4/4. In terms of biological role, catalyzes the isomerization of L-ribulose 5-phosphate to D-xylulose 5-phosphate. Is involved in the anaerobic L-ascorbate utilization. The protein is Probable L-ribulose-5-phosphate 4-epimerase UlaF of Mycoplasma pneumoniae (strain ATCC 29342 / M129 / Subtype 1) (Mycoplasmoides pneumoniae).